A 697-amino-acid polypeptide reads, in one-letter code: Portal protein (697 aa).

The tract at residues 633 to 697 is disordered; that stretch reads MSREAAGGVP…RRAGGPYGFH (65 aa). The segment covering 664–689 has biased composition (basic and acidic residues); it reads ITADEERRGPERVGRFRNGGPDDPRR.

Belongs to the herpesviridae portal protein family. As to quaternary structure, homododecamerizes. Interacts with terminase subunits TRM1 and TRM3.

Its subcellular location is the virion. The protein localises to the host nucleus. In terms of biological role, forms a portal in the viral capsid through which viral DNA is translocated during DNA packaging. Assembles as a dodecamer at a single fivefold axe of the T=16 icosahedric capsid. Binds to the molecular motor that translocates the viral DNA, termed terminase. This is Portal protein (UL104) from Homo sapiens (Human).